A 190-amino-acid polypeptide reads, in one-letter code: Interferon alpha-9 (190 aa).

The signal sequence occupies residues 1–23; it reads MARPFAFLMVLVVISYWSTCSLG. 2 disulfides stabilise this stretch: Cys-24-Cys-122 and Cys-52-Cys-162. Asn-101 is a glycosylation site (N-linked (GlcNAc...) asparagine).

It belongs to the alpha/beta interferon family.

It localises to the secreted. In terms of biological role, produced by macrophages, IFN-alpha have antiviral activities. Interferon stimulates the production of two enzymes: a protein kinase and an oligoadenylate synthetase. This is Interferon alpha-9 (Ifna9) from Mus musculus (Mouse).